The sequence spans 572 residues: Asparagine--tRNA ligase, cytoplasmic 1 (572 aa).

A2 is modified (N-acetylalanine). Positions 53 to 131 form a DNA-binding region, OB; it reads VRIGGWVKSG…QQIELNVVKV (79 aa). The WHEP-TRS domain maps to 236–292; sequence DVEAARLIVIERGNVVAELKAAKASKEAITAAVAELKIAKETFAHIDERSRLRPGLP.

This sequence belongs to the class-II aminoacyl-tRNA synthetase family.

Its subcellular location is the cytoplasm. It is found in the cytosol. It carries out the reaction tRNA(Asn) + L-asparagine + ATP = L-asparaginyl-tRNA(Asn) + AMP + diphosphate + H(+). This Arabidopsis thaliana (Mouse-ear cress) protein is Asparagine--tRNA ligase, cytoplasmic 1.